A 289-amino-acid chain; its full sequence is Protoheme IX farnesyltransferase 2 (289 aa).

Transmembrane regions (helical) follow at residues 1-21, 28-48, 76-96, 100-120, 125-145, 155-175, 199-219, 221-241, and 260-280; these read MIKPGIIMGNLISVTGGFLLA, LTLMLMTILGLSLVVASGCGL, YSVLVFSLALGLIGFGLLAIF, IALLFAVIGYLVYVGIYSLYM, VYGTLIGSFSGAVPPVVGYCA, VILLLMFSLWQMPHSYAIAIF, LHIVLYIAVFSLVSALLPLAG, TGIAFMAVTCATSLWWLGMAL, and CSIVTITALSIAMAMDFQLVV.

This sequence belongs to the UbiA prenyltransferase family. Protoheme IX farnesyltransferase subfamily.

It localises to the cell inner membrane. It catalyses the reaction heme b + (2E,6E)-farnesyl diphosphate + H2O = Fe(II)-heme o + diphosphate. It participates in porphyrin-containing compound metabolism; heme O biosynthesis; heme O from protoheme: step 1/1. Functionally, converts heme B (protoheme IX) to heme O by substitution of the vinyl group on carbon 2 of heme B porphyrin ring with a hydroxyethyl farnesyl side group. This is Protoheme IX farnesyltransferase 2 from Shewanella woodyi (strain ATCC 51908 / MS32).